Reading from the N-terminus, the 379-residue chain is UDP-N-acetylglucosamine--N-acetylmuramyl-(pentapeptide) pyrophosphoryl-undecaprenol N-acetylglucosamine transferase (379 aa).

UDP-N-acetyl-alpha-D-glucosamine-binding positions include 13–15, Asn123, Arg166, Ser194, and Gln295; that span reads TGG.

This sequence belongs to the glycosyltransferase 28 family. MurG subfamily.

It is found in the cell inner membrane. It carries out the reaction di-trans,octa-cis-undecaprenyl diphospho-N-acetyl-alpha-D-muramoyl-L-alanyl-D-glutamyl-meso-2,6-diaminopimeloyl-D-alanyl-D-alanine + UDP-N-acetyl-alpha-D-glucosamine = di-trans,octa-cis-undecaprenyl diphospho-[N-acetyl-alpha-D-glucosaminyl-(1-&gt;4)]-N-acetyl-alpha-D-muramoyl-L-alanyl-D-glutamyl-meso-2,6-diaminopimeloyl-D-alanyl-D-alanine + UDP + H(+). It participates in cell wall biogenesis; peptidoglycan biosynthesis. Cell wall formation. Catalyzes the transfer of a GlcNAc subunit on undecaprenyl-pyrophosphoryl-MurNAc-pentapeptide (lipid intermediate I) to form undecaprenyl-pyrophosphoryl-MurNAc-(pentapeptide)GlcNAc (lipid intermediate II). The polypeptide is UDP-N-acetylglucosamine--N-acetylmuramyl-(pentapeptide) pyrophosphoryl-undecaprenol N-acetylglucosamine transferase (Rhodospirillum centenum (strain ATCC 51521 / SW)).